A 75-amino-acid chain; its full sequence is Putative membrane protein insertion efficiency factor (75 aa).

The protein belongs to the UPF0161 family.

The protein resides in the cell inner membrane. Could be involved in insertion of integral membrane proteins into the membrane. The protein is Putative membrane protein insertion efficiency factor of Leptospira biflexa serovar Patoc (strain Patoc 1 / ATCC 23582 / Paris).